Reading from the N-terminus, the 483-residue chain is Dual specificity protein phosphatase CDC14C (483 aa).

Positions 1–45 (MKRKSEGRSSWAAATCSPCCSLTSPSVKKIRSPTQQDPRHRDPQD) are disordered. Residues 1–53 (MKRKSEGRSSWAAATCSPCCSLTSPSVKKIRSPTQQDPRHRDPQDDVYLDITD) carry the Nucleolar localization signal motif. A compositionally biased stretch (low complexity) spans 12–26 (AAATCSPCCSLTSPS). The a stretch occupies residues 43 to 197 (PQDDVYLDIT…AMQYGFLNFN (155 aa)). Residues 198 to 211 (SFNLDEYEHYEKAE) are linker. The b stretch occupies residues 212-378 (NGDLNWIIPD…EGDYFCQKLK (167 aa)). The 161-residue stretch at 213-373 (GDLNWIIPDR…TSLWLEGDYF (161 aa)) folds into the Tyrosine-protein phosphatase domain. Cysteine 313 acts as the Phosphocysteine intermediate in catalysis. Positions 407–426 (QDQQEPEPYSDDDEINGGTQ) are disordered. A compositionally biased stretch (acidic residues) spans 408–421 (DQQEPEPYSDDDEI). A helical membrane pass occupies residues 444 to 466 (ILLTCPLAVLTSALCSVVIWWIV).

This sequence belongs to the protein-tyrosine phosphatase family. Non-receptor class CDC14 subfamily.

Its subcellular location is the membrane. It localises to the nucleus. It is found in the nucleolus. The protein localises to the cytoplasm. The protein resides in the cytoskeleton. It catalyses the reaction O-phospho-L-tyrosyl-[protein] + H2O = L-tyrosyl-[protein] + phosphate. It carries out the reaction O-phospho-L-seryl-[protein] + H2O = L-seryl-[protein] + phosphate. The catalysed reaction is O-phospho-L-threonyl-[protein] + H2O = L-threonyl-[protein] + phosphate. Dual-specificity phosphatase. Preferentially dephosphorylates proteins modified by proline-directed kinases. The chain is Dual specificity protein phosphatase CDC14C from Symphalangus syndactylus (Siamang).